A 171-amino-acid chain; its full sequence is Shikimate kinase (171 aa).

Position 14 to 19 (14 to 19 (GAGKST)) interacts with ATP. Residue S18 participates in Mg(2+) binding. Substrate contacts are provided by D36, R60, and G82. Position 120 (R120) interacts with ATP. Residue R139 participates in substrate binding. Q156 serves as a coordination point for ATP.

This sequence belongs to the shikimate kinase family. In terms of assembly, monomer. Requires Mg(2+) as cofactor.

It localises to the cytoplasm. It carries out the reaction shikimate + ATP = 3-phosphoshikimate + ADP + H(+). It participates in metabolic intermediate biosynthesis; chorismate biosynthesis; chorismate from D-erythrose 4-phosphate and phosphoenolpyruvate: step 5/7. In terms of biological role, catalyzes the specific phosphorylation of the 3-hydroxyl group of shikimic acid using ATP as a cosubstrate. The sequence is that of Shikimate kinase from Shewanella loihica (strain ATCC BAA-1088 / PV-4).